An 82-amino-acid polypeptide reads, in one-letter code: Putative membrane protein insertion efficiency factor (82 aa).

Belongs to the UPF0161 family.

The protein resides in the cell inner membrane. Could be involved in insertion of integral membrane proteins into the membrane. This is Putative membrane protein insertion efficiency factor from Aeromonas salmonicida (strain A449).